The primary structure comprises 192 residues: 7-methyl-GTP pyrophosphatase (192 aa).

The active-site Proton acceptor is Asp-69.

The protein belongs to the Maf family. YceF subfamily. It depends on a divalent metal cation as a cofactor.

It localises to the cytoplasm. The enzyme catalyses N(7)-methyl-GTP + H2O = N(7)-methyl-GMP + diphosphate + H(+). In terms of biological role, nucleoside triphosphate pyrophosphatase that hydrolyzes 7-methyl-GTP (m(7)GTP). May have a dual role in cell division arrest and in preventing the incorporation of modified nucleotides into cellular nucleic acids. The polypeptide is 7-methyl-GTP pyrophosphatase (Pseudomonas fluorescens (strain ATCC BAA-477 / NRRL B-23932 / Pf-5)).